The chain runs to 234 residues: Leucyl/phenylalanyl-tRNA--protein transferase (234 aa).

It belongs to the L/F-transferase family.

The protein localises to the cytoplasm. It catalyses the reaction N-terminal L-lysyl-[protein] + L-leucyl-tRNA(Leu) = N-terminal L-leucyl-L-lysyl-[protein] + tRNA(Leu) + H(+). It carries out the reaction N-terminal L-arginyl-[protein] + L-leucyl-tRNA(Leu) = N-terminal L-leucyl-L-arginyl-[protein] + tRNA(Leu) + H(+). The catalysed reaction is L-phenylalanyl-tRNA(Phe) + an N-terminal L-alpha-aminoacyl-[protein] = an N-terminal L-phenylalanyl-L-alpha-aminoacyl-[protein] + tRNA(Phe). In terms of biological role, functions in the N-end rule pathway of protein degradation where it conjugates Leu, Phe and, less efficiently, Met from aminoacyl-tRNAs to the N-termini of proteins containing an N-terminal arginine or lysine. In Salmonella paratyphi A (strain ATCC 9150 / SARB42), this protein is Leucyl/phenylalanyl-tRNA--protein transferase.